A 312-amino-acid chain; its full sequence is MTDKIVVAALYKFVSLPDYQALREPLLQTLLDNGIKGTLLLAEEGINGTVSGSRAAIDALLAWFRQDARLADIDHKESYCDEQPFYRTKVKLKKEIVTLGVPGVDPNQRVGTYVEPQDWNALISDPEVLLIDTRNDYEVAIGTFEGAIDPKTKSFREFPEYVKAHFDPSKHKKVAMFCTGGIRCEKASSYMLGEGFEEVYHLKGGILKYLEEVPQEQTKWRGDCFVFDNRVTVRHDLSEGDYDQCHACRNPISVEDRQSEYYSPGVSCPHCWDSLPEKTRESARERQKQIELARARNQPHPIGRDPRQLNEA.

Residues 124-218 (SDPEVLLIDT…YLEEVPQEQT (95 aa)) enclose the Rhodanese domain. The Cysteine persulfide intermediate role is filled by cysteine 178. Basic and acidic residues-rich tracts occupy residues 279–294 (TRES…ELAR) and 302–312 (IGRDPRQLNEA). Positions 279-312 (TRESARERQKQIELARARNQPHPIGRDPRQLNEA) are disordered.

This sequence belongs to the TrhO family.

The catalysed reaction is uridine(34) in tRNA + AH2 + O2 = 5-hydroxyuridine(34) in tRNA + A + H2O. In terms of biological role, catalyzes oxygen-dependent 5-hydroxyuridine (ho5U) modification at position 34 in tRNAs. This is tRNA uridine(34) hydroxylase from Ectopseudomonas mendocina (strain ymp) (Pseudomonas mendocina).